The sequence spans 140 residues: Phosphoribosyl-AMP cyclohydrolase (140 aa).

Asp-84 contacts Mg(2+). A Zn(2+)-binding site is contributed by Cys-85. Mg(2+) contacts are provided by Asp-86 and Asp-88. Zn(2+) is bound by residues Cys-101 and Cys-108.

The protein belongs to the PRA-CH family. In terms of assembly, homodimer. Requires Mg(2+) as cofactor. Zn(2+) serves as cofactor.

The protein localises to the cytoplasm. It carries out the reaction 1-(5-phospho-beta-D-ribosyl)-5'-AMP + H2O = 1-(5-phospho-beta-D-ribosyl)-5-[(5-phospho-beta-D-ribosylamino)methylideneamino]imidazole-4-carboxamide. Its pathway is amino-acid biosynthesis; L-histidine biosynthesis; L-histidine from 5-phospho-alpha-D-ribose 1-diphosphate: step 3/9. Catalyzes the hydrolysis of the adenine ring of phosphoribosyl-AMP. In Chloroherpeton thalassium (strain ATCC 35110 / GB-78), this protein is Phosphoribosyl-AMP cyclohydrolase.